The following is a 246-amino-acid chain: Major prion protein (246 aa).

An N-terminal signal peptide occupies residues 1-15 (MLVLFVATWSDLGLC). Residues 16–223 (KKRPKPGGWN…ESQAYYQRGS (208 aa)) form an interaction with GRB2, ERI3 and SYN1 region. The segment at 18–102 (RPKPGGWNTG…HKPSKPKTSM (85 aa)) is disordered. A run of 5 repeats spans residues 44-52 (PQGGGGWGQ), 53-60 (PHGGGWGQ), 61-68 (PHGGGWGQ), 69-76 (PHGGGWGQ), and 77-84 (PHGGGWGQ). The segment at 44-84 (PQGGGGWGQPHGGGWGQPHGGGWGQPHGGGWGQPHGGGWGQ) is 5 X 8 AA tandem repeats of P-H-G-G-G-W-G-Q. Over residues 45–88 (QGGGGWGQPHGGGWGQPHGGGWGQPHGGGWGQPHGGGWGQGGGT) the composition is skewed to gly residues. Cu(2+) contacts are provided by H54, G55, G56, H62, G63, G64, H70, G71, G72, H78, G79, and G80. Residues 91-102 (QWHKPSKPKTSM) show a composition bias toward basic residues. An intrachain disulfide couples C172 to C207. 2 N-linked (GlcNAc...) asparagine glycosylation sites follow: N174 and N190. Residue S223 is the site of GPI-anchor amidated serine attachment. Positions 224-246 (SMVLFSSPPVILLISFLIFLIVG) are cleaved as a propeptide — removed in mature form.

It belongs to the prion family. In terms of assembly, monomer and homodimer. Has a tendency to aggregate into amyloid fibrils containing a cross-beta spine, formed by a steric zipper of superposed beta-strands. Soluble oligomers may represent an intermediate stage on the path to fibril formation. Copper binding may promote oligomerization. Interacts with GRB2, APP, ERI3/PRNPIP and SYN1. Mislocalized cytosolically exposed PrP interacts with MGRN1; this interaction alters MGRN1 subcellular location and causes lysosomal enlargement. Interacts with KIAA1191.

Its subcellular location is the cell membrane. The protein localises to the golgi apparatus. Its function is as follows. Its primary physiological function is unclear. Has cytoprotective activity against internal or environmental stresses. May play a role in neuronal development and synaptic plasticity. May be required for neuronal myelin sheath maintenance. May play a role in iron uptake and iron homeostasis. Soluble oligomers are toxic to cultured neuroblastoma cells and induce apoptosis (in vitro). Association with GPC1 (via its heparan sulfate chains) targets PRNP to lipid rafts. Also provides Cu(2+) or Zn(2+) for the ascorbate-mediated GPC1 deaminase degradation of its heparan sulfate side chains. The polypeptide is Major prion protein (PRNP) (Cercocebus atys (Sooty mangabey)).